The primary structure comprises 351 residues: Ion-translocating oxidoreductase complex subunit D (351 aa).

A run of 4 helical transmembrane segments spans residues Ile-20 to Gly-40, Leu-44 to Leu-64, Leu-89 to Ala-109, and Pro-123 to Leu-143. Thr-187 is subject to FMN phosphoryl threonine. Helical transmembrane passes span Leu-215–Leu-235, Ile-244–Pro-264, Phe-267–Ala-287, Leu-301–Pro-321, and Asp-322–Thr-342.

Belongs to the NqrB/RnfD family. In terms of assembly, the complex is composed of six subunits: RnfA, RnfB, RnfC, RnfD, RnfE and RnfG. FMN is required as a cofactor.

The protein localises to the cell inner membrane. Functionally, part of a membrane-bound complex that couples electron transfer with translocation of ions across the membrane. This chain is Ion-translocating oxidoreductase complex subunit D, found in Pectobacterium atrosepticum (strain SCRI 1043 / ATCC BAA-672) (Erwinia carotovora subsp. atroseptica).